Reading from the N-terminus, the 553-residue chain is Flotillin family inner membrane protein YqiK (553 aa).

Residues 1–9 (MDDIVNSVP) are Periplasmic-facing. Residues 10–30 (SWMFTAIIAVCILFIIGIIFA) traverse the membrane as a helical segment. At 31 to 553 (RLYRRASAEQ…STTPVEEKAE (523 aa)) the chain is on the cytoplasmic side.

The protein belongs to the band 7/mec-2 family. Flotillin subfamily. In terms of assembly, homooligomerizes.

It localises to the cell inner membrane. The protein resides in the membrane raft. Found in membrane microdomains that may be equivalent to eukaryotic membrane rafts. FMMs are highly dynamic and increase in number as cells age. Flotillins are thought to be important factors in membrane fluidity. This chain is Flotillin family inner membrane protein YqiK (yqiK), found in Escherichia coli (strain K12).